The following is a 370-amino-acid chain: uncharacterized protein (370 aa).

An N6-(pyridoxal phosphate)lysine modification is found at Lys207.

This sequence belongs to the class-V pyridoxal-phosphate-dependent aminotransferase family. The cofactor is pyridoxal 5'-phosphate.

This is an uncharacterized protein from Bacillus subtilis (strain 168).